A 177-amino-acid polypeptide reads, in one-letter code: uncharacterized protein (177 aa).

A run of 4 helical transmembrane segments spans residues 20–42 (NLVS…LLAL), 62–84 (VVLW…VSLS), 94–116 (AMSS…GYFI), and 136–158 (GLLY…IIVA).

Its subcellular location is the cell membrane. This is an uncharacterized protein from Methanocaldococcus jannaschii (strain ATCC 43067 / DSM 2661 / JAL-1 / JCM 10045 / NBRC 100440) (Methanococcus jannaschii).